A 148-amino-acid chain; its full sequence is Large ribosomal subunit protein bL19 (148 aa).

The protein belongs to the bacterial ribosomal protein bL19 family.

This protein is located at the 30S-50S ribosomal subunit interface and may play a role in the structure and function of the aminoacyl-tRNA binding site. The protein is Large ribosomal subunit protein bL19 of Beijerinckia indica subsp. indica (strain ATCC 9039 / DSM 1715 / NCIMB 8712).